The following is a 137-amino-acid chain: Fluoride-specific ion channel FluC 1 (137 aa).

A run of 4 helical transmembrane segments spans residues 3–23 (PLVVLAVAIAGGLGAVARLVL), 42–62 (INVTGSFVLGLVTALALGHGL), 69–89 (ILGTGFIGGYTTFSTASYEAV), and 107–127 (MMFLALGAAGLGLWLGGLAVA). Na(+) contacts are provided by Gly76 and Thr79.

The protein belongs to the fluoride channel Fluc/FEX (TC 1.A.43) family.

Its subcellular location is the cell membrane. It carries out the reaction fluoride(in) = fluoride(out). With respect to regulation, na(+) is not transported, but it plays an essential structural role and its presence is essential for fluoride channel function. In terms of biological role, fluoride-specific ion channel. Important for reducing fluoride concentration in the cell, thus reducing its toxicity. This chain is Fluoride-specific ion channel FluC 1, found in Leifsonia xyli subsp. xyli (strain CTCB07).